A 470-amino-acid polypeptide reads, in one-letter code: Syncoilin (470 aa).

The tract at residues 1 to 43 (MASPEPLRGGDGARASREPHTEASFPLQESESPKEAKTFNPEA) is disordered. Residues 1-148 (MASPEPLRGG…TEGSLPAQPI (148 aa)) form a head region. A Phosphoserine modification is found at Ser32. One can recognise an IF rod domain in the interval 157–452 (SVEDLERLEA…AMLPKSLEQA (296 aa)). The segment at 158-192 (VEDLERLEARFQQCVQAVSQLEEERDQLIHELVLL) is coil 1A. The tract at residues 193 to 219 (REPALQEVQQVHQDILAAYKLHAQAEL) is linker 1. The tract at residues 220-297 (ERDGLREEIR…KEQLQQQLEA (78 aa)) is coil 1b. Positions 298–337 (PPTQSDGHFLQESRRLSTQFENLMAESRQGLEEEYEPQLL) are linker 2. At Ser314 the chain carries Phosphoserine. The segment at 338–445 (RLLERKEAGT…EELSTYKAML (108 aa)) is coil 2. Positions 446 to 470 (PKSLEQADAPTSQAGGVEAQSPGTV) are disordered. The tract at residues 446–470 (PKSLEQADAPTSQAGGVEAQSPGTV) is tail.

The protein belongs to the intermediate filament family. In terms of assembly, may link the dystrophin-associated glycoprotein complex (DAPC) to intracellular desmin (DES) filaments. Interacts with DES and DTNA. Detected strongly in skeletal muscle and heart and weakly in lung (at protein level). Highly expressed in skeletal muscle and lung and weakly in lung and testis.

It is found in the cytoplasm. The protein resides in the perinuclear region. In terms of biological role, atypical type III intermediate filament (IF) protein that may play a supportive role in the efficient coupling of mechanical stress between the myofibril and fiber exterior. May facilitate lateral force transmission during skeletal muscle contraction. Does not form homofilaments nor heterofilaments with other IF proteins. This Mus musculus (Mouse) protein is Syncoilin (Sync).